A 714-amino-acid polypeptide reads, in one-letter code: Polyribonucleotide nucleotidyltransferase (714 aa).

2 residues coordinate Mg(2+): Asp-488 and Asp-494. In terms of domain architecture, KH spans 555 to 614 (PRIEVMNIPTDKIRDVIGSGGKVIREIVEKTGAKINIEDDGTVKIASSNGKEIEAAKKWI). Residues 624–692 (GEIYEGTVVK…ERGKVRLSMK (69 aa)) enclose the S1 motif domain.

This sequence belongs to the polyribonucleotide nucleotidyltransferase family. Mg(2+) is required as a cofactor.

The protein resides in the cytoplasm. The enzyme catalyses RNA(n+1) + phosphate = RNA(n) + a ribonucleoside 5'-diphosphate. Functionally, involved in mRNA degradation. Catalyzes the phosphorolysis of single-stranded polyribonucleotides processively in the 3'- to 5'-direction. The chain is Polyribonucleotide nucleotidyltransferase from Brucella ovis (strain ATCC 25840 / 63/290 / NCTC 10512).